We begin with the raw amino-acid sequence, 1072 residues long: Isoleucine--tRNA ligase, cytoplasmic (1072 aa).

The 'HIGH' region signature appears at 47–57 (PFATGTPHYGH). Residue Lys-486 forms a Glycyl lysine isopeptide (Lys-Gly) (interchain with G-Cter in ubiquitin) linkage. The 'KMSKS' region motif lies at 602–606 (KMSKS). Lys-605 lines the ATP pocket. 2 positions are modified to phosphoserine: Ser-829 and Ser-1059.

It belongs to the class-I aminoacyl-tRNA synthetase family.

Its subcellular location is the cytoplasm. The catalysed reaction is tRNA(Ile) + L-isoleucine + ATP = L-isoleucyl-tRNA(Ile) + AMP + diphosphate. In Saccharomyces cerevisiae (strain ATCC 204508 / S288c) (Baker's yeast), this protein is Isoleucine--tRNA ligase, cytoplasmic (ILS1).